Consider the following 37-residue polypeptide: Large ribosomal subunit protein bL36 (37 aa).

Belongs to the bacterial ribosomal protein bL36 family.

This Oleidesulfovibrio alaskensis (strain ATCC BAA-1058 / DSM 17464 / G20) (Desulfovibrio alaskensis) protein is Large ribosomal subunit protein bL36 (rpmJ).